The sequence spans 187 residues: Ribosome-recycling factor (187 aa).

This sequence belongs to the RRF family.

It localises to the cytoplasm. Functionally, responsible for the release of ribosomes from messenger RNA at the termination of protein biosynthesis. May increase the efficiency of translation by recycling ribosomes from one round of translation to another. The protein is Ribosome-recycling factor of Rhodopseudomonas palustris (strain HaA2).